The sequence spans 156 residues: Transcription elongation factor GreA (156 aa).

Residues 12–72 (YKKLEDELST…KEIEHELKYA (61 aa)) adopt a coiled-coil conformation.

This sequence belongs to the GreA/GreB family.

Necessary for efficient RNA polymerase transcription elongation past template-encoded arresting sites. The arresting sites in DNA have the property of trapping a certain fraction of elongating RNA polymerases that pass through, resulting in locked ternary complexes. Cleavage of the nascent transcript by cleavage factors such as GreA or GreB allows the resumption of elongation from the new 3'terminus. GreA releases sequences of 2 to 3 nucleotides. This chain is Transcription elongation factor GreA, found in Dehalococcoides mccartyi (strain ATCC BAA-2266 / KCTC 15142 / 195) (Dehalococcoides ethenogenes (strain 195)).